The sequence spans 505 residues: Probable cytochrome P450 28c1 (505 aa).

Residue C444 coordinates heme.

The protein belongs to the cytochrome P450 family. It depends on heme as a cofactor.

It is found in the endoplasmic reticulum membrane. Its subcellular location is the microsome membrane. Functionally, may be involved in the metabolism of insect hormones and in the breakdown of synthetic insecticides. The chain is Probable cytochrome P450 28c1 (Cyp28c1) from Drosophila melanogaster (Fruit fly).